The following is a 244-amino-acid chain: 5-oxoprolinase subunit A (244 aa).

The protein belongs to the LamB/PxpA family. Forms a complex composed of PxpA, PxpB and PxpC.

It catalyses the reaction 5-oxo-L-proline + ATP + 2 H2O = L-glutamate + ADP + phosphate + H(+). Functionally, catalyzes the cleavage of 5-oxoproline to form L-glutamate coupled to the hydrolysis of ATP to ADP and inorganic phosphate. This is 5-oxoprolinase subunit A from Shigella flexneri.